Consider the following 321-residue polypeptide: Transcription factor ATOH8 (321 aa).

2 disordered regions span residues 59–193 and 203–222; these read GLRD…SSYS and HQDS…AASS. Residues 70-85 show a composition bias toward pro residues; that stretch reads VPVPVPVPVPVAPAVP. Positions 93–109 are enriched in basic and acidic residues; sequence AGERGGSRAPEVSDARK. The segment covering 121–132 has biased composition (pro residues); that stretch reads LPTPPPPPPPAP. Positions 133-143 are enriched in low complexity; that stretch reads QSQAPGGPEAQ. The span at 160–186 shows a compositional bias: pro residues; it reads PARPAPSAPPAPPAPPESTVRPAPPTR. Positions 230 to 243 are basic motif; degenerate; the sequence is TRRLLANARERTRV. A bHLH domain is found at 230–282; that stretch reads TRRLLANARERTRVHTISAAFEALRKQVPCYSYGQKLSKLAILRIACNYILSL. Positions 244-282 are helix-loop-helix motif; it reads HTISAAFEALRKQVPCYSYGQKLSKLAILRIACNYILSL.

In terms of assembly, efficient DNA binding requires dimerization with another bHLH protein. Interacts with NEUROG3 and NEUROD1. Interacts with ZFPM2; mediates indirect interaction with GATA4. Forms a heterodimer with TCF3; repress transcription of TCF3 and TCF3/NEUROG3 dimer-induced transactivation of E box-dependent promoters. In terms of tissue distribution, expressed in lung, liver, kidney, heart and pancreas. Expressed in endothel of umbilical vessels.

It is found in the nucleus. Its subcellular location is the nucleus speckle. It localises to the cytoplasm. Functionally, transcription factor that binds a palindromic (canonical) core consensus DNA sequence 5'-CANNTG- 3' known as an E-box element, possibly as a heterodimer with other bHLH proteins. Regulates endothelial cell proliferation, migration and tube-like structures formation. Modulates endothelial cell differentiation through NOS3. May be implicated in specification and differentiation of neuronal cell lineages in the brain. May participate in kidney development and may be involved in podocyte differentiation. During early embryonic development is involved in tissue-specific differentiation processes that are dependent on class II bHLH factors and namely modulates the differentiation program initiated by the pro-endocrine factor NEUROG3. During myogenesis, may play a role during the transition of myoblasts from the proliferative phase to the differentiation phase. Positively regulates HAMP transcription in two ways, firstly by acting directly on the HAMP promoter via E-boxes binding and indirectly through increased phosphorylation of SMAD protein complex. Repress NEUROG3-dependent gene activation in a gene-specific manner through at least two mechanisms; requires only either the sequestering of a general partner such as TCF3 through heterodimerization, either also requires binding of the bHLH domain to DNA via a basic motif. The chain is Transcription factor ATOH8 from Homo sapiens (Human).